The chain runs to 643 residues: uncharacterized protein (643 aa).

The span at 179 to 199 shows a compositional bias: low complexity; the sequence is FKSSQLQQSPSPNKKSPSYSQ. Disordered stretches follow at residues 179–200 and 349–377; these read FKSS…YSQV and KRSN…STEN.

This is an uncharacterized protein from Caenorhabditis elegans.